The primary structure comprises 608 residues: Bifunctional lycopene cyclase/phytoene synthase (608 aa).

The tract at residues 1 to 240 (MSILTYLEFH…LVFATCAIDR (240 aa)) is lycopene beta-cyclase. A run of 7 helical transmembrane segments spans residues 3 to 23 (ILTY…ALCW), 37 to 56 (YKFL…NYIV), 80 to 97 (YMFF…SNFV), 117 to 137 (LLVR…AWHL), 150 to 170 (ILWY…EYIL), 175 to 195 (AVLL…IVAI), and 218 to 238 (VEEC…TCAI). The segment at 247–608 (LYKSSVQNQN…ARKIKSFFVD (362 aa)) is phytoene synthase.

The protein in the N-terminal section; belongs to the lycopene beta-cyclase family. This sequence in the C-terminal section; belongs to the phytoene/squalene synthase family.

The protein localises to the membrane. It carries out the reaction all-trans-lycopene = gamma-carotene. It catalyses the reaction gamma-carotene = all-trans-beta-carotene. The enzyme catalyses 2 (2E,6E,10E)-geranylgeranyl diphosphate = 15-cis-phytoene + 2 diphosphate. Its pathway is carotenoid biosynthesis; beta-carotene biosynthesis. It functions in the pathway carotenoid biosynthesis; phytoene biosynthesis; all-trans-phytoene from geranylgeranyl diphosphate: step 1/1. Functionally, bifunctional enzyme that catalyzes the reactions from geranylgeranyl diphosphate to phytoene (phytoene synthase) and lycopene to beta-carotene via the intermediate gamma-carotene (lycopene cyclase). This is Bifunctional lycopene cyclase/phytoene synthase from Blakeslea trispora (Choanephora trispora).